A 229-amino-acid chain; its full sequence is MPKKKALTPFPYLASIVFLPWWISLSFTKSLEPWVTNWWNTGQSKTFLNDIQEKNVLERFIELEQLFLLDEMIKEYPETQIQKFHIGIHKETLQLVKMHNEDHIHIVLHFSTNIICFAILSGYYFLGNEELVILNSWVQEFLYNLSDTIKAFSILLVTDLCIGFHSPRGWELMIGSVYKDFGFAHNDQIISGLVSTFPVILDTILKYWIFHYLNRVSPSLVVIYHSMNE.

3 helical membrane-spanning segments follow: residues 7–27, 106–126, and 189–209; these read LTPFPYLASIVFLPWWISLSF, IVLHFSTNIICFAILSGYYFL, and IISGLVSTFPVILDTILKYWI.

The protein belongs to the CemA family.

It is found in the plastid. It localises to the chloroplast inner membrane. The catalysed reaction is K(+)(in) + H(+)(out) = K(+)(out) + H(+)(in). Its function is as follows. Contributes to K(+)/H(+) antiport activity by supporting proton efflux to control proton extrusion and homeostasis in chloroplasts in a light-dependent manner to modulate photosynthesis. Prevents excessive induction of non-photochemical quenching (NPQ) under continuous-light conditions. Indirectly promotes efficient inorganic carbon uptake into chloroplasts. The chain is Potassium/proton antiporter CemA from Calycanthus floridus var. glaucus (Eastern sweetshrub).